Reading from the N-terminus, the 201-residue chain is Recombination protein RecR (201 aa).

A C4-type zinc finger spans residues 57 to 72 (CADCRTFTEQDVCNIC). A Toprim domain is found at 81 to 176 (GQICVVESPA…EASRIAHGVP (96 aa)).

This sequence belongs to the RecR family.

May play a role in DNA repair. It seems to be involved in an RecBC-independent recombinational process of DNA repair. It may act with RecF and RecO. This chain is Recombination protein RecR, found in Citrobacter koseri (strain ATCC BAA-895 / CDC 4225-83 / SGSC4696).